We begin with the raw amino-acid sequence, 356 residues long: Protein pelota homolog (356 aa).

This sequence belongs to the eukaryotic release factor 1 family. Pelota subfamily. Monomer. A divalent metal cation is required as a cofactor.

It is found in the cytoplasm. Functionally, may function in recognizing stalled ribosomes, interact with stem-loop structures in stalled mRNA molecules, and effect endonucleolytic cleavage of the mRNA. May play a role in the release non-functional ribosomes and degradation of damaged mRNAs. Has endoribonuclease activity. This chain is Protein pelota homolog, found in Aeropyrum pernix (strain ATCC 700893 / DSM 11879 / JCM 9820 / NBRC 100138 / K1).